The following is a 136-amino-acid chain: Large ribosomal subunit protein uL16 (136 aa).

It belongs to the universal ribosomal protein uL16 family. As to quaternary structure, part of the 50S ribosomal subunit.

Its function is as follows. Binds 23S rRNA and is also seen to make contacts with the A and possibly P site tRNAs. The chain is Large ribosomal subunit protein uL16 from Mesomycoplasma hyopneumoniae (strain 232) (Mycoplasma hyopneumoniae).